The chain runs to 361 residues: Mitogen-activated protein kinase 14 (361 aa).

A Protein kinase domain is found at 32–316 (YVPIKPIGRG…VSDALLHPYM (285 aa)). ATP is bound by residues 38–46 (IGRGAYGVV) and Lys61. The Proton acceptor role is filled by Asp158. Thr188 carries the post-translational modification Phosphothreonine. Positions 188-190 (TEY) match the TXY motif. At Tyr190 the chain carries Phosphotyrosine. Thr193 is modified (phosphothreonine).

It belongs to the protein kinase superfamily. CMGC Ser/Thr protein kinase family. MAP kinase subfamily. Interacts with MKK3. In terms of processing, dually phosphorylated on Thr-188 and Tyr-190, which activates the enzyme.

It catalyses the reaction L-seryl-[protein] + ATP = O-phospho-L-seryl-[protein] + ADP + H(+). The catalysed reaction is L-threonyl-[protein] + ATP = O-phospho-L-threonyl-[protein] + ADP + H(+). Activated by threonine and tyrosine phosphorylation. The polypeptide is Mitogen-activated protein kinase 14 (MPK14) (Arabidopsis thaliana (Mouse-ear cress)).